The sequence spans 373 residues: Peptide chain release factor 1-like, mitochondrial (373 aa).

The transit peptide at 1–13 (MRSGFLRSARRLW) directs the protein to the mitochondrion. Positions 56-111 (QLAAAARLLNEKERELRDTESLLHDENEDLKKLAESEIALCQKEIAELKHRIISLL) form a coiled coil. A GGQ domain region spans residues 229–293 (PKDLRIDTKR…LRARLYSMRL (65 aa)). Positions 243–245 (GGQ) match the GGQ motif. Glutamine 245 bears the N5-methylglutamine mark.

It belongs to the prokaryotic/mitochondrial release factor family. In terms of processing, methylation of glutamine in the GGQ triplet by HEMK1 is conserved from bacteria to mammals.

Its subcellular location is the mitochondrion. In terms of biological role, mitochondrial peptide chain release factor that directs the termination of translation in response to the peptide chain termination codons UAA and UAG. This Rattus norvegicus (Rat) protein is Peptide chain release factor 1-like, mitochondrial (Mtrf1l).